We begin with the raw amino-acid sequence, 120 residues long: Large ribosomal subunit protein uL18 (120 aa).

Belongs to the universal ribosomal protein uL18 family. As to quaternary structure, part of the 50S ribosomal subunit; part of the 5S rRNA/L5/L18 subcomplex. In B.stearothermophilus only 2 proteins, L5 and L18 have been shown to be part of this subcomplex, unlike the case in E.coli and T.thermophilus where L25 (TL5) is also found. The protein, when overexpressed in E.coli, contains a phosphoserine, which is required for the protein to bind to 5S rRNA. It has been suggested, based solely on amino acid conservation, that this occurs on Ser-57.

Its function is as follows. This is one of the proteins that bind and probably mediate the attachment of the 5S RNA into the large ribosomal subunit, where it forms part of the central protuberance. The chain is Large ribosomal subunit protein uL18 (rplR) from Geobacillus stearothermophilus (Bacillus stearothermophilus).